A 337-amino-acid chain; its full sequence is Serpentine receptor class alpha-17 (337 aa).

6 consecutive transmembrane segments (helical) span residues 28-48, 110-130, 155-175, 197-217, 247-267, and 282-302; these read LNFV…GLAI, ELYF…SLTF, IIQL…VPLV, FRTA…YLSV, CILI…VNYI, and IAPF…VIYF.

The protein belongs to the nematode receptor-like protein sra family.

Its subcellular location is the membrane. The protein is Serpentine receptor class alpha-17 (sra-17) of Caenorhabditis elegans.